The chain runs to 147 residues: Delta-latroinsectotoxin-Lhe1a (147 aa).

ANK repeat units lie at residues 57–59 (VSI), 66–78 (NNWTPLHFAIYFK), 79–96 (KNPAVSAVLILENKDIEA), and 98–125 (TSIMLIVQKLLLELYNYFINNYAETLDE).

The protein belongs to the cationic peptide 01 (latrotoxin) family. 04 (delta-latroinsectotoxin) subfamily. In terms of assembly, homotetramer in membrane. In terms of tissue distribution, expressed by the venom gland.

It is found in the secreted. The protein localises to the target cell membrane. Its function is as follows. Insecticidal presynaptic neurotoxin that induces massive neurotransmitter release at insect (but not vertebrate) neuromuscular junctions. Native toxin forms cation-permeable pores (with high permeability to calcium) in lipid membranes locust muscle membrane and artificial lipid bilayers. May bind to insect neurexin-1 homolog, insect adhesion G protein-coupled receptor L1 homolog, and insect receptor-type tyrosine-protein phosphatase S homolog, and induces neurotransmitter exocytosis both by forming tetrameric pores in membranes and signaling via G protein-coupled receptor. Oligomerization is a process independent of divalent cations. The polypeptide is Delta-latroinsectotoxin-Lhe1a (Latrodectus hesperus (Western black widow spider)).